The sequence spans 466 residues: Asparagine--tRNA ligase (466 aa).

The protein belongs to the class-II aminoacyl-tRNA synthetase family. In terms of assembly, homodimer.

Its subcellular location is the cytoplasm. It catalyses the reaction tRNA(Asn) + L-asparagine + ATP = L-asparaginyl-tRNA(Asn) + AMP + diphosphate + H(+). This is Asparagine--tRNA ligase from Aliivibrio fischeri (strain ATCC 700601 / ES114) (Vibrio fischeri).